A 288-amino-acid chain; its full sequence is Phosphatidylserine decarboxylase proenzyme (288 aa).

Residues Asp88, His145, and Ser248 each act as charge relay system; for autoendoproteolytic cleavage activity in the active site. Ser248 acts as the Schiff-base intermediate with substrate; via pyruvic acid; for decarboxylase activity in catalysis. Pyruvic acid (Ser); by autocatalysis is present on Ser248.

The protein belongs to the phosphatidylserine decarboxylase family. PSD-B subfamily. Prokaryotic type I sub-subfamily. Heterodimer of a large membrane-associated beta subunit and a small pyruvoyl-containing alpha subunit. Pyruvate is required as a cofactor. In terms of processing, is synthesized initially as an inactive proenzyme. Formation of the active enzyme involves a self-maturation process in which the active site pyruvoyl group is generated from an internal serine residue via an autocatalytic post-translational modification. Two non-identical subunits are generated from the proenzyme in this reaction, and the pyruvate is formed at the N-terminus of the alpha chain, which is derived from the carboxyl end of the proenzyme. The autoendoproteolytic cleavage occurs by a canonical serine protease mechanism, in which the side chain hydroxyl group of the serine supplies its oxygen atom to form the C-terminus of the beta chain, while the remainder of the serine residue undergoes an oxidative deamination to produce ammonia and the pyruvoyl prosthetic group on the alpha chain. During this reaction, the Ser that is part of the protease active site of the proenzyme becomes the pyruvoyl prosthetic group, which constitutes an essential element of the active site of the mature decarboxylase.

It is found in the cell membrane. The enzyme catalyses a 1,2-diacyl-sn-glycero-3-phospho-L-serine + H(+) = a 1,2-diacyl-sn-glycero-3-phosphoethanolamine + CO2. It functions in the pathway phospholipid metabolism; phosphatidylethanolamine biosynthesis; phosphatidylethanolamine from CDP-diacylglycerol: step 2/2. Catalyzes the formation of phosphatidylethanolamine (PtdEtn) from phosphatidylserine (PtdSer). In Azoarcus sp. (strain BH72), this protein is Phosphatidylserine decarboxylase proenzyme.